We begin with the raw amino-acid sequence, 2562 residues long: Zinc finger homeobox protein 2 (2562 aa).

Residues Met1–Val13 are compositionally biased toward polar residues. Disordered stretches follow at residues Met1–Asp88 and Pro337–Pro410. A compositionally biased stretch (basic and acidic residues) spans Gly56–Gly73. C2H2-type zinc fingers lie at residues Leu446–His469 and Tyr501–His525. Disordered stretches follow at residues Gln530–Thr559, Pro603–Pro651, and Arg669–Asp705. Over residues Pro609–Pro622 the composition is skewed to pro residues. Polar residues predominate over residues Leu690–Pro704. C2H2-type zinc fingers lie at residues His752 to His776, Leu815 to His839, and Tyr864 to His888. Positions Arg923 to Asp966 are disordered. The C2H2-type 6 zinc finger occupies Tyr1003 to His1026. Disordered regions lie at residues Asn1058–Arg1126 and Met1140–Thr1166. Pro residues-rich tracts occupy residues Ser1091–Ala1101 and Asp1114–Ala1124. 2 C2H2-type zinc fingers span residues Tyr1185–His1211 and Phe1242–His1266. The span at Arg1278–Pro1305 shows a compositional bias: basic and acidic residues. Positions Arg1278–Gly1313 are disordered. The C2H2-type 9 zinc-finger motif lies at Leu1474–His1497. The tract at residues Leu1520–Ala1584 is disordered. Residues Tyr1521–Pro1531 show a composition bias toward pro residues. A DNA-binding region (homeobox 1) is located at residues Arg1589 to Ala1648. The segment at Ser1664–Tyr1687 adopts a C2H2-type 10; degenerate zinc-finger fold. The disordered stretch occupies residues Asp1689 to Val1760. Over residues Gln1690 to Glu1713 the composition is skewed to acidic residues. Residues Thr1743–Gly1752 show a composition bias toward basic and acidic residues. Residues Tyr1761–His1783 form a C2H2-type 11 zinc finger. Disordered stretches follow at residues Ser1814–Arg1853, Arg1907–Phe1934, Pro1971–Gly2057, Lys2114–Ala2136, Pro2186–Ala2210, Gln2263–Ser2313, and Leu2391–Ser2429. The segment at residues Asp1851 to Gln1910 is a DNA-binding region (homeobox 2). The span at Thr1985 to Ala1996 shows a compositional bias: pro residues. Residues Lys2008 to Pro2037 show a composition bias toward low complexity. Residues Gly2038–Gly2051 are compositionally biased toward gly residues. Positions Gln2058 to Lys2117 form a DNA-binding region, homeobox 3. Residues Pro2188–Thr2200 are compositionally biased toward pro residues. Polar residues predominate over residues Pro2275 to Pro2286. Basic and acidic residues predominate over residues Ser2295–Pro2305. The span at Pro2395–Leu2411 shows a compositional bias: pro residues. The segment at Tyr2441–Arg2461 adopts a C2H2-type 12; degenerate zinc-finger fold. The segment at Tyr2485–His2509 adopts a C2H2-type 13 zinc-finger fold. 2 disordered regions span residues Ser2506–Thr2525 and Glu2540–Leu2562. Residues Thr2553–Leu2562 are compositionally biased toward low complexity.

In terms of tissue distribution, expressed in brain (at protein level). Expressed at the highest levels in the pyramidal cell layer of the hippocampus, the suprachiasmatic nucleus, laterodorsal thalamic nucleus, lateral geniculate nucleus, substantia nigra pars compacta, and magnocellular part of the red nucleus (at protein level). Highly expressed in dorsal root ganglia. Expressed at lower levels in kidney, stomach, liver, heart and testis.

Its subcellular location is the nucleus. In terms of biological role, transcriptional regulator that is critical for the regulation of pain perception and processing of noxious stimuli. The chain is Zinc finger homeobox protein 2 from Mus musculus (Mouse).